The primary structure comprises 456 residues: UDP-N-acetylmuramoylalanine--D-glutamate ligase (456 aa).

113-119 (GTNGKTT) provides a ligand contact to ATP.

Belongs to the MurCDEF family.

Its subcellular location is the cytoplasm. It catalyses the reaction UDP-N-acetyl-alpha-D-muramoyl-L-alanine + D-glutamate + ATP = UDP-N-acetyl-alpha-D-muramoyl-L-alanyl-D-glutamate + ADP + phosphate + H(+). It participates in cell wall biogenesis; peptidoglycan biosynthesis. Functionally, cell wall formation. Catalyzes the addition of glutamate to the nucleotide precursor UDP-N-acetylmuramoyl-L-alanine (UMA). The chain is UDP-N-acetylmuramoylalanine--D-glutamate ligase from Rippkaea orientalis (strain PCC 8801 / RF-1) (Cyanothece sp. (strain PCC 8801)).